A 1228-amino-acid polypeptide reads, in one-letter code: Multimerin-1 (1228 aa).

The signal sequence occupies residues 1–19 (MKGARLFVLLSSLWSGGIG). A glycan (N-linked (GlcNAc...) asparagine) is linked at N21. Residues 68 to 98 (TPEARTSEDSLLKSTLPPSETSAPAEGVRNQ) form a disordered region. Positions 79–89 (LKSTLPPSETS) are enriched in polar residues. N97, N114, and N120 each carry an N-linked (GlcNAc...) asparagine glycan. N136 carries N-linked (GlcNAc...) (complex) asparagine glycosylation. Positions 157-200 (NTVGGTGGIGGVGGTGGVGNRAPRETYLSRGDSSSSQRTDYQKS) are disordered. The segment covering 160 to 175 (GGTGGIGGVGGTGGVG) has biased composition (gly residues). The Cell attachment site signature appears at 186 to 188 (RGD). The span at 187–200 (GDSSSSQRTDYQKS) shows a compositional bias: polar residues. One can recognise an EMI domain in the interval 207–282 (GKNWCAYVHT…PGYSGPKCQL (76 aa)). Intrachain disulfides connect C211–C272, C238–C245, and C271–C280. O-linked (Fuc) threonine glycosylation is present at T216. Residue T265 is glycosylated (O-linked (Fuc) threonine). Coiled-coil stretches lie at residues 333 to 365 (MKLTLLQKKIDNISLTVNDVRNTYSSLEGKVSE) and 400 to 430 (NDMQETVAQLFKTVSSLSEDLESTRQIIQKV). N344 carries an N-linked (GlcNAc...) asparagine glycan. Residues N431, N507, N541, N576, N618, N680, N729, N783, N816, N828, N840, N921, N933, N942, N981, and N1020 are each glycosylated (N-linked (GlcNAc...) asparagine). Positions 503 to 523 (YESLNKTLSKLKEVHEQLLST) form a coiled coil. Coiled-coil stretches lie at residues 580–650 (SLEM…EILQ) and 675–726 (RKKI…EMED). The stretch at 819–869 (NFQKMYQMFNETTSQVRKYQQNMSHLEEKLLLTTKISKNFETRLQDIESKV) forms a coiled coil. An EGF-like domain is found at 1041–1077 (EYSSCSRHPCQNGGTCINGRTSFTCACRHPFTGDNCT). Intrachain disulfides connect C1045–C1056, C1050–C1065, and C1067–C1076. T1055 carries O-linked (Fuc) threonine glycosylation. N-linked (GlcNAc...) asparagine glycosylation is present at N1075. The region spanning 1096–1228 (RYAPMVAFFA…TFSGYLLYRT (133 aa)) is the C1q domain.

In terms of assembly, multimeric. Composed of varying sized, disulfide-linked multimers, the smallest of which is a homotrimer. Proteolysis of the promultimerin in the N-terminal region, leads to the mature p155 form that is stored in platelets. Interacts with factor V/Va. Post-translationally, the N-terminus is blocked. In terms of processing, extensively N-glycosylated. O-fucosylated within the EMI domain (at Thr-216 and Thr-265) by FUT10/POFUT3 and FUT11/POFUT4. O-fucosylation at Thr-216 and Thr-1055 are required for facilitating protein folding and secretion. Synthesized by endothelial cells and megakaryocytes. Stored in platelet alpha granules and endothelial cell Weibel-Palade bodies, following activation of these cells, it is released and attached to megakaryocytes, platelets, endothelium and subendothelium of blood vessels. Not found in plasma. Found in vascular tissues such as placenta, lung, and liver.

It localises to the secreted. Carrier protein for platelet (but not plasma) factor V/Va. Plays a role in the storage and stabilization of factor V in platelets. Upon release following platelet activation, may limit platelet and plasma factor Va-dependent thrombin generation. Ligand for integrin alpha-IIb/beta-3 and integrin alpha-V/beta-3 on activated platelets, and may function as an extracellular matrix or adhesive protein. This chain is Multimerin-1 (MMRN1), found in Homo sapiens (Human).